Consider the following 555-residue polypeptide: Beta-hexosaminidase A (555 aa).

Positions 1-18 (MRLLIPILIFALITTAVT) are cleaved as a signal peptide. Asn47 is a glycosylation site (N-linked (GlcNAc...) asparagine). Glu325 acts as the Proton donor in catalysis. Residues Asn351, Asn412, and Asn460 are each glycosylated (N-linked (GlcNAc...) asparagine).

This sequence belongs to the glycosyl hydrolase 20 family. In terms of tissue distribution, expressed in coelomocytes and neurons of the pharyngeal region and nerve cord.

It localises to the lysosome. The catalysed reaction is Hydrolysis of terminal non-reducing N-acetyl-D-hexosamine residues in N-acetyl-beta-D-hexosaminides.. Functionally, responsible for the degradation of GM2 gangliosides, and a variety of other molecules containing terminal N-acetyl hexosamines. Degrades chitotriose. This chain is Beta-hexosaminidase A (hex-1), found in Caenorhabditis elegans.